A 330-amino-acid polypeptide reads, in one-letter code: Phenylalanine--tRNA ligase alpha subunit (330 aa).

Residue glutamate 246 participates in Mg(2+) binding.

It belongs to the class-II aminoacyl-tRNA synthetase family. Phe-tRNA synthetase alpha subunit type 1 subfamily. Tetramer of two alpha and two beta subunits. Requires Mg(2+) as cofactor.

The protein resides in the cytoplasm. It catalyses the reaction tRNA(Phe) + L-phenylalanine + ATP = L-phenylalanyl-tRNA(Phe) + AMP + diphosphate + H(+). The chain is Phenylalanine--tRNA ligase alpha subunit from Campylobacter jejuni subsp. jejuni serotype O:6 (strain 81116 / NCTC 11828).